The following is an 867-amino-acid chain: Putative ubiquitin thioesterase L96 (867 aa).

Disordered stretches follow at residues 49 to 73 (VNQY…GKQD), 177 to 204 (IKSV…MKKK), 231 to 271 (YILS…PKYR), and 379 to 591 (LSTQ…YKGG). Basic residues-rich tracts occupy residues 234-258 (SRKK…RSPG) and 421-430 (KITRKPKSPR). 2 stretches are compositionally biased toward low complexity: residues 433-462 (PPAS…SVRA) and 472-551 (PPSS…KSPS). The span at 565–575 (ITVDPSVTPPS) shows a compositional bias: polar residues. Residues 582–591 (RPELPEYKGG) show a composition bias toward basic and acidic residues. Residues 606–745 (YKVIPVKGDG…DYHYTALTPL (140 aa)) form the OTU domain. The active site involves D614. Catalysis depends on C617, which acts as the Nucleophile. The active site involves H738.

It carries out the reaction Thiol-dependent hydrolysis of ester, thioester, amide, peptide and isopeptide bonds formed by the C-terminal Gly of ubiquitin (a 76-residue protein attached to proteins as an intracellular targeting signal).. Functionally, hydrolase that can remove conjugated ubiquitin from proteins and may therefore play an important regulatory role at the level of protein turnover by preventing degradation. May be involved in TIV genomic DNA packaging in a manner related to the Gag polyproteins of the mammalian viruses. This chain is Putative ubiquitin thioesterase L96, found in Tipula iridescent virus (TIV).